Here is a 411-residue protein sequence, read N- to C-terminus: Glutamate dehydrogenase A (411 aa).

The active site involves lysine 102.

This sequence belongs to the Glu/Leu/Phe/Val dehydrogenases family.

The catalysed reaction is L-glutamate + NAD(+) + H2O = 2-oxoglutarate + NH4(+) + NADH + H(+). It carries out the reaction L-glutamate + NADP(+) + H2O = 2-oxoglutarate + NH4(+) + NADPH + H(+). The polypeptide is Glutamate dehydrogenase A (GDHA) (Nicotiana plumbaginifolia (Leadwort-leaved tobacco)).